The chain runs to 134 residues: Transcription antitermination protein NusB (134 aa).

This sequence belongs to the NusB family.

Functionally, involved in transcription antitermination. Required for transcription of ribosomal RNA (rRNA) genes. Binds specifically to the boxA antiterminator sequence of the ribosomal RNA (rrn) operons. This is Transcription antitermination protein NusB from Shewanella frigidimarina (strain NCIMB 400).